A 726-amino-acid chain; its full sequence is Catalase-peroxidase (726 aa).

Residues 91–214 constitute a cross-link (tryptophyl-tyrosyl-methioninium (Trp-Tyr) (with M-240)); it reads WHSAGTYRIA…LGAVQMGLIY (124 aa). His-92 functions as the Proton acceptor in the catalytic mechanism. The tryptophyl-tyrosyl-methioninium (Tyr-Met) (with W-91) cross-link spans 214 to 240; that stretch reads YVNPEGPNGNPDPLAAARDIRETFARM. Position 255 (His-255) interacts with heme b. Positions 335 to 362 are disordered; it reads AHQWRPKAGAGADSVPDPHDPNKRRTPS.

Belongs to the peroxidase family. Peroxidase/catalase subfamily. Homodimer or homotetramer. Requires heme b as cofactor. Post-translationally, formation of the three residue Trp-Tyr-Met cross-link is important for the catalase, but not the peroxidase activity of the enzyme.

The catalysed reaction is H2O2 + AH2 = A + 2 H2O. It carries out the reaction 2 H2O2 = O2 + 2 H2O. Bifunctional enzyme with both catalase and broad-spectrum peroxidase activity. The sequence is that of Catalase-peroxidase from Pseudomonas fluorescens (strain ATCC BAA-477 / NRRL B-23932 / Pf-5).